Reading from the N-terminus, the 467-residue chain is 3-isopropylmalate dehydratase large subunit (467 aa).

3 residues coordinate [4Fe-4S] cluster: C347, C407, and C410.

Belongs to the aconitase/IPM isomerase family. LeuC type 1 subfamily. Heterodimer of LeuC and LeuD. It depends on [4Fe-4S] cluster as a cofactor.

It carries out the reaction (2R,3S)-3-isopropylmalate = (2S)-2-isopropylmalate. It participates in amino-acid biosynthesis; L-leucine biosynthesis; L-leucine from 3-methyl-2-oxobutanoate: step 2/4. Functionally, catalyzes the isomerization between 2-isopropylmalate and 3-isopropylmalate, via the formation of 2-isopropylmaleate. The polypeptide is 3-isopropylmalate dehydratase large subunit (Pelagibacter ubique (strain HTCC1062)).